The following is a 421-amino-acid chain: Synaptotagmin-15 (421 aa).

The Extracellular segment spans residues 1–4 (MAEQ). Residues 5-29 (LALVIGGTIGGLLLLLLIGASCCLW) form a helical; Signal-anchor for type III membrane protein membrane-spanning segment. Residues 30–421 (RRFCATLTYE…WHALCRTTEP (392 aa)) are Cytoplasmic-facing. Residues 47–68 (MATTAASSGQRDRPCQPHARTQ) are disordered. 2 C2 domains span residues 147–264 (CLGR…RRVI) and 278–399 (EFGD…EHWD).

The protein belongs to the synaptotagmin family. As to quaternary structure, homodimer.

It is found in the cell membrane. May be involved in the trafficking and exocytosis of secretory vesicles in non-neuronal tissues. The sequence is that of Synaptotagmin-15 (SYT15) from Homo sapiens (Human).